A 115-amino-acid chain; its full sequence is Large ribosomal subunit protein eL30 (115 aa).

This sequence belongs to the eukaryotic ribosomal protein eL30 family. As to quaternary structure, component of the large ribosomal subunit.

The protein resides in the cytoplasm. In terms of biological role, component of the large ribosomal subunit. The ribosome is a large ribonucleoprotein complex responsible for the synthesis of proteins in the cell. The sequence is that of Large ribosomal subunit protein eL30 (RPL30) from Gallus gallus (Chicken).